The following is a 90-amino-acid chain: Probable Fe(2+)-trafficking protein (90 aa).

The protein belongs to the Fe(2+)-trafficking protein family.

In terms of biological role, could be a mediator in iron transactions between iron acquisition and iron-requiring processes, such as synthesis and/or repair of Fe-S clusters in biosynthetic enzymes. This is Probable Fe(2+)-trafficking protein from Coxiella burnetii (strain CbuK_Q154) (Coxiella burnetii (strain Q154)).